We begin with the raw amino-acid sequence, 315 residues long: Protein FRA10AC1 (315 aa).

N-acetylmethionine is present on M1. The disordered stretch occupies residues 1 to 28 (MHGHGGYDSDFSDDERCGESSKRKKRTV). 2 positions are modified to phosphoserine: S9 and S12. K36 is subject to N6-acetyllysine. The span at 226–235 (EIKSKKRKDK) shows a compositional bias: basic residues. Residues 226-315 (EIKSKKRKDK…FDEYFQDLFL (90 aa)) form a disordered region. Residues 236 to 245 (TKKDCEESSH) are compositionally biased toward basic and acidic residues. Phosphoserine occurs at positions 251, 252, 278, 283, and 285. The segment covering 268–278 (KKSEDSLLRNS) has biased composition (basic and acidic residues). Over residues 301-315 (SQEEEFDEYFQDLFL) the composition is skewed to acidic residues.

Interacts with ESS2. Ubiquitously expressed with higher expression in brain, heart, skeletal muscle, kidney and liver.

It localises to the nucleus. In terms of biological role, may be involved in pre-mRNA splicing. The chain is Protein FRA10AC1 (FRA10AC1) from Homo sapiens (Human).